Reading from the N-terminus, the 349-residue chain is uncharacterized protein (349 aa).

The signal sequence occupies residues 1–29; it reads MKQKYENYFKKRLILNLLIFLLLACSSES.

This is an uncharacterized protein from Borreliella burgdorferi (strain ATCC 35210 / DSM 4680 / CIP 102532 / B31) (Borrelia burgdorferi).